We begin with the raw amino-acid sequence, 240 residues long: Endonuclease NBR9 (240 aa).

A disordered region spans residues 1-24; it reads MKGTGGVVVGTQNPVRDYNHSTDE. A Smr domain is found at 97–173; the sequence is IDLHGLYVKE…NSGVLVLELQ (77 aa). Residues 181-219 are disordered; the sequence is GPAVNAPTNQYNAQPHPQYNNNGGQPQGQAQNYNNSGND. Positions 194–215 are enriched in low complexity; the sequence is QPHPQYNNNGGQPQGQAQNYNN.

It is found in the cytoplasm. Functionally, endonuclease involved in nonstop mRNA decay via the formation of mRNA cleavage fragments in the vicinity of stalled ribosomes. This Saccharomyces cerevisiae (strain ATCC 204508 / S288c) (Baker's yeast) protein is Endonuclease NBR9.